The following is a 414-amino-acid chain: Putative ankyrin repeat protein BB_B28 (414 aa).

2 ANK repeats span residues 326–355 (NGNPIFTYAINVKAKSIINYLITKEFNINL) and 359–389 (NSQTALHSAIIQKYDLNFIKSLIEKGANPNI).

This is Putative ankyrin repeat protein BB_B28 from Borreliella burgdorferi (strain ATCC 35210 / DSM 4680 / CIP 102532 / B31) (Borrelia burgdorferi).